A 124-amino-acid chain; its full sequence is Pal-related lipoprotein (124 aa).

Residues 1–18 (MRYRAVFPMLIIVFALSG) form the signal peptide. The N-palmitoyl cysteine moiety is linked to residue Cys19. The S-diacylglycerol cysteine moiety is linked to residue Cys19.

It is found in the cell membrane. The chain is Pal-related lipoprotein (slp) from Bacillus subtilis (strain 168).